The chain runs to 143 residues: Myocilin opposite strand protein (143 aa).

The tract at residues 65–111 (MATRDETITKKSGEGEEMLPSMGMDHESPSKAHLMVPPAPPPSPADA) is disordered. The segment covering 66–78 (ATRDETITKKSGE) has biased composition (basic and acidic residues).

The chain is Myocilin opposite strand protein from Mus musculus (Mouse).